An 869-amino-acid chain; its full sequence is Protein translocase subunit SecA (869 aa).

Residues Gln-85, 103 to 107 (GEGKT), and Asp-508 each bind ATP.

It belongs to the SecA family. In terms of assembly, monomer and homodimer. Part of the essential Sec protein translocation apparatus which comprises SecA, SecYEG and auxiliary proteins SecDF. Other proteins may also be involved.

The protein localises to the cell membrane. It localises to the cytoplasm. The catalysed reaction is ATP + H2O + cellular proteinSide 1 = ADP + phosphate + cellular proteinSide 2.. Part of the Sec protein translocase complex. Interacts with the SecYEG preprotein conducting channel. Has a central role in coupling the hydrolysis of ATP to the transfer of proteins into and across the cell membrane, serving as an ATP-driven molecular motor driving the stepwise translocation of polypeptide chains across the membrane. The protein is Protein translocase subunit SecA of Deinococcus geothermalis (strain DSM 11300 / CIP 105573 / AG-3a).